Here is a 92-residue protein sequence, read N- to C-terminus: MPRSLKKGPYIEPKLLNKVMVAQESRSKRVIRTWSRRSTIIPEMVGLTLAVHNGKKFLPVFVTENMVGHKLGEFSPTRTFYGHAGDKKTRGK.

This sequence belongs to the universal ribosomal protein uS19 family.

Its function is as follows. Protein S19 forms a complex with S13 that binds strongly to the 16S ribosomal RNA. This chain is Small ribosomal subunit protein uS19, found in Desulfatibacillum aliphaticivorans.